A 492-amino-acid chain; its full sequence is Cytochrome P450 2A1 (492 aa).

Ser-130 carries the phosphoserine modification. Cys-437 contributes to the heme binding site.

The protein belongs to the cytochrome P450 family. It depends on heme as a cofactor. As to expression, liver and testis.

It localises to the endoplasmic reticulum membrane. The protein localises to the microsome membrane. The enzyme catalyses an organic molecule + reduced [NADPH--hemoprotein reductase] + O2 = an alcohol + oxidized [NADPH--hemoprotein reductase] + H2O + H(+). Highly active in the 7-alpha-hydroxylation of testosterone, progesterone and androstenedione. This Rattus norvegicus (Rat) protein is Cytochrome P450 2A1 (Cyp2a1).